The following is a 384-amino-acid chain: Deoxyguanosinetriphosphate triphosphohydrolase-like protein (384 aa).

The segment at 12–39 (ELASYASDPSKTRGRRHSEPPPENRTEF) is disordered. A compositionally biased stretch (basic and acidic residues) spans 28–39 (HSEPPPENRTEF). The region spanning 73–208 (RLTHSLEVAQ…ANLADEVAYN (136 aa)) is the HD domain.

This sequence belongs to the dGTPase family. Type 2 subfamily.

This Bordetella parapertussis (strain 12822 / ATCC BAA-587 / NCTC 13253) protein is Deoxyguanosinetriphosphate triphosphohydrolase-like protein.